We begin with the raw amino-acid sequence, 883 residues long: Valine--tRNA ligase (883 aa).

The 'HIGH' region signature appears at 46-56 (PNVTGKLHLGH). The 'KMSKS' region signature appears at 520–524 (KMSKS). Lys-523 serves as a coordination point for ATP. A coiled-coil region spans residues 809–844 (LVDLLNVEEELARLEKELAKWQKELDMVGKKLSNER).

Belongs to the class-I aminoacyl-tRNA synthetase family. ValS type 1 subfamily. Monomer.

It localises to the cytoplasm. The enzyme catalyses tRNA(Val) + L-valine + ATP = L-valyl-tRNA(Val) + AMP + diphosphate. Its function is as follows. Catalyzes the attachment of valine to tRNA(Val). As ValRS can inadvertently accommodate and process structurally similar amino acids such as threonine, to avoid such errors, it has a 'posttransfer' editing activity that hydrolyzes mischarged Thr-tRNA(Val) in a tRNA-dependent manner. The polypeptide is Valine--tRNA ligase (Streptococcus pneumoniae (strain ATCC BAA-255 / R6)).